A 243-amino-acid chain; its full sequence is Tubulin-folding cofactor B (243 aa).

In terms of domain architecture, CAP-Gly spans 181 to 223; the sequence is RAESLGPGYWVGIQYDEPLGKHDGMVKGTRFFECPRLQGGMVR.

Belongs to the TBCB family. Supercomplex made of cofactors A to E. Cofactors A and D function by capturing and stabilizing tubulin in a quasi-native conformation. Cofactor E binds to the cofactor D-tubulin complex; interaction with cofactor C then causes the release of tubulin polypeptides that are committed to the native state. Interacts with TUBA6. As to expression, expressed in roots, stems, leaves, flowers and siliques.

Its subcellular location is the cytoplasm. Functionally, involved in control of cell division. Regulates probably the availability of alpha-tubulin for dimerization of alpha-/beta-tubulin, which is required for proper microtubule biogenesis. Decreased expression of TFCB results in enlarged mesophyll cells and leaf epidermal cells with bulged nuclei, increased ploidy and increased numbers of spindles and phragmoplasts. The sequence is that of Tubulin-folding cofactor B (TFCB) from Arabidopsis thaliana (Mouse-ear cress).